We begin with the raw amino-acid sequence, 291 residues long: N-acetylmannosamine kinase (291 aa).

Residues 5–12 and 132–139 each bind ATP; these read AIDIGGTK and GVGGGVVS. Residues His156, Cys166, Cys168, and Cys173 each coordinate Zn(2+).

Belongs to the ROK (NagC/XylR) family. NanK subfamily. As to quaternary structure, homodimer.

It carries out the reaction an N-acyl-D-mannosamine + ATP = an N-acyl-D-mannosamine 6-phosphate + ADP + H(+). It functions in the pathway amino-sugar metabolism; N-acetylneuraminate degradation; D-fructose 6-phosphate from N-acetylneuraminate: step 2/5. In terms of biological role, catalyzes the phosphorylation of N-acetylmannosamine (ManNAc) to ManNAc-6-P. The polypeptide is N-acetylmannosamine kinase (nanK1) (Escherichia coli O6:H1 (strain CFT073 / ATCC 700928 / UPEC)).